Here is a 699-residue protein sequence, read N- to C-terminus: Elongation factor G (699 aa).

The tr-type G domain occupies 8–290 (NRYRNIGICA…AVIEFLPAPD (283 aa)). Residues 17–24 (AHVDAGKT), 88–92 (DTPGH), and 142–145 (NKMD) contribute to the GTP site.

It belongs to the TRAFAC class translation factor GTPase superfamily. Classic translation factor GTPase family. EF-G/EF-2 subfamily.

The protein localises to the cytoplasm. Its function is as follows. Catalyzes the GTP-dependent ribosomal translocation step during translation elongation. During this step, the ribosome changes from the pre-translocational (PRE) to the post-translocational (POST) state as the newly formed A-site-bound peptidyl-tRNA and P-site-bound deacylated tRNA move to the P and E sites, respectively. Catalyzes the coordinated movement of the two tRNA molecules, the mRNA and conformational changes in the ribosome. This is Elongation factor G from Alcanivorax borkumensis (strain ATCC 700651 / DSM 11573 / NCIMB 13689 / SK2).